The primary structure comprises 336 residues: Tryptophan--tRNA ligase (336 aa).

ATP contacts are provided by residues 11 to 13 (TTT) and 19 to 20 (GN). The short motif at 12 to 20 (TTGIPHLGN) is the 'HIGH' region element. Residue D145 coordinates L-tryptophan. Residues 157–159 (GRD), L196, and 203–207 (KMSKS) each bind ATP. Residues 203 to 207 (KMSKS) carry the 'KMSKS' region motif.

Belongs to the class-I aminoacyl-tRNA synthetase family. Homodimer.

It localises to the cytoplasm. It carries out the reaction tRNA(Trp) + L-tryptophan + ATP = L-tryptophyl-tRNA(Trp) + AMP + diphosphate + H(+). Functionally, catalyzes the attachment of tryptophan to tRNA(Trp). This chain is Tryptophan--tRNA ligase, found in Neisseria meningitidis serogroup A / serotype 4A (strain DSM 15465 / Z2491).